The following is a 200-amino-acid chain: Ribonuclease HII (200 aa).

The RNase H type-2 domain maps to Gln11–Gly200. A divalent metal cation is bound by residues Asp17, Glu18, and Asp109.

This sequence belongs to the RNase HII family. Requires Mn(2+) as cofactor. The cofactor is Mg(2+).

It is found in the cytoplasm. It catalyses the reaction Endonucleolytic cleavage to 5'-phosphomonoester.. Functionally, endonuclease that specifically degrades the RNA of RNA-DNA hybrids. The chain is Ribonuclease HII from Hamiltonella defensa subsp. Acyrthosiphon pisum (strain 5AT).